The following is a 533-amino-acid chain: E3 ubiquitin-protein ligase MGRN1 (533 aa).

Gly2 carries the N-myristoyl glycine lipid modification. The RING-type zinc finger occupies 278 to 317 (ECVVCLSDLRDTLILPCRHLCLCTSCADTLRYQANNCPIC). A Required for TSG101-binding motif is present at residues 385–388 (PSAP). Tyr390 is modified (phosphotyrosine). The disordered stretch occupies residues 421–519 (QKGKTQSKSP…QPVPPADIYL (99 aa)). Residues 423–439 (GKTQSKSPDSTLRSPSS) are compositionally biased toward polar residues. A phosphoserine mark is found at Ser429, Ser450, and Ser502. Positions 443–454 (EEDEEKLSEDPE) are enriched in acidic residues.

As to quaternary structure, interacts with MC1R and MC4R. Interacts with TSG101. Interacts with mislocalized cytosolically exposed PRNP; this interaction alters MGRN1 subcellular location and causes lysosomal enlargement. In terms of processing, autoubiquitinated in vitro.

It localises to the cytoplasm. The protein resides in the cytosol. The protein localises to the cell membrane. It is found in the early endosome. The catalysed reaction is S-ubiquitinyl-[E2 ubiquitin-conjugating enzyme]-L-cysteine + [acceptor protein]-L-lysine = [E2 ubiquitin-conjugating enzyme]-L-cysteine + N(6)-ubiquitinyl-[acceptor protein]-L-lysine.. It functions in the pathway protein modification; protein ubiquitination. Functionally, E3 ubiquitin-protein ligase. Mediates TSG101 monoubiquitination at multiple sites. Plays a role in the regulation of endosome-to-lysosome trafficking. Impairs MC1R- and MC4R-signaling by competing with GNAS-binding to MCRs and inhibiting agonist-induced cAMP production. Does not inhibit ADRB2-signaling. Does not promote MC1R ubiquitination. Also acts as a negative regulator of hedgehog signaling. The chain is E3 ubiquitin-protein ligase MGRN1 (Mgrn1) from Rattus norvegicus (Rat).